Here is a 669-residue protein sequence, read N- to C-terminus: DNA ligase (669 aa).

NAD(+) is bound by residues 34–38, 83–84, and Glu-114; these read DAEYD and SL. Lys-116 acts as the N6-AMP-lysine intermediate in catalysis. Positions 137, 171, 287, and 311 each coordinate NAD(+). The Zn(2+) site is built by Cys-405, Cys-408, Cys-423, and Cys-428. Residues 591–669 enclose the BRCT domain; the sequence is NVESYFAGKT…EERFLQELNK (79 aa).

The protein belongs to the NAD-dependent DNA ligase family. LigA subfamily. The cofactor is Mg(2+). Requires Mn(2+) as cofactor.

It catalyses the reaction NAD(+) + (deoxyribonucleotide)n-3'-hydroxyl + 5'-phospho-(deoxyribonucleotide)m = (deoxyribonucleotide)n+m + AMP + beta-nicotinamide D-nucleotide.. In terms of biological role, DNA ligase that catalyzes the formation of phosphodiester linkages between 5'-phosphoryl and 3'-hydroxyl groups in double-stranded DNA using NAD as a coenzyme and as the energy source for the reaction. It is essential for DNA replication and repair of damaged DNA. The protein is DNA ligase of Bacillus cereus (strain ATCC 10987 / NRS 248).